A 1488-amino-acid polypeptide reads, in one-letter code: Eukaryotic translation initiation factor 4G (1488 aa).

3 disordered regions span residues 196–320 (VQHR…GQTS), 337–367 (DSEK…GKSE), and 415–707 (THQI…MTEA). Basic and acidic residues-rich tracts occupy residues 216-244 (VSEK…EKHP) and 274-299 (ADEK…RNDT). Polar residues-rich tracts occupy residues 300 to 310 (KNLPQQPQSAS), 345 to 360 (SKVS…SSIS), 448 to 464 (SLAT…SFVT), and 473 to 495 (CTTS…TQTL). Residues 496-520 (SASVDASDVSEVNSGTSSESTSQST) are compositionally biased toward low complexity. Residues 555-566 (QVKHADGAKDES) show a composition bias toward basic and acidic residues. The segment covering 627-646 (QEQSESVATSDGADSSSTVD) has biased composition (polar residues). Positions 651–671 (LPEESEREVMCEDDGKKKVEP) are enriched in basic and acidic residues. Positions 683–696 (PKLQSSDSGNQASA) are enriched in polar residues. An EIF4E-binding region spans residues 709–721 (GRKKYSRDFLLTF). Residues 753-784 (DREPHPSSARGSDRPTSRGDRRGPAMDDDKWL) are compositionally biased toward basic and acidic residues. Disordered stretches follow at residues 753–795 (DREP…PNRD), 974–1000 (RGER…EREE), and 1107–1299 (WQQR…SEEE). The MIF4G domain maps to 883-1106 (QRQLKAILNK…RDSIDLRKNK (224 aa)). Residues 978-989 (EEAEADKTEEEG) show a composition bias toward acidic residues. 4 stretches are compositionally biased toward basic and acidic residues: residues 990-1000 (EIKQTKEEREE), 1111-1132 (RKVD…ERHA), 1181-1191 (IRYEQERHQFD), and 1254-1267 (TRED…DRFS). Residues 1273–1294 (AAQSASSSHRPASQEGRSGNKS) show a composition bias toward polar residues. The MI domain maps to 1299 to 1423 (ELREKSIATI…VLQDVGKLIE (125 aa)).

This sequence belongs to the eukaryotic initiation factor 4G family. As to quaternary structure, EIF4F is a multi-subunit complex, the composition of which varies with external and internal environmental conditions. It is composed of at least EIF4A, EIF4E and EIF4G. In higher plants two isoforms of EIF4F have been identified, named isoform EIF4F and isoform EIF(iso)4F. Isoform EIF4F has subunits p220 and p26, whereas isoform EIF(iso)4F has subunits p82 and p28.

Functionally, component of the protein complex eIF4F, which is involved in the recognition of the mRNA cap, ATP-dependent unwinding of 5'-terminal secondary structure and recruitment of mRNA to the ribosome. The chain is Eukaryotic translation initiation factor 4G from Triticum aestivum (Wheat).